We begin with the raw amino-acid sequence, 339 residues long: Phosphoribosylformylglycinamidine cyclo-ligase (339 aa).

It belongs to the AIR synthase family.

It localises to the cytoplasm. It carries out the reaction 2-formamido-N(1)-(5-O-phospho-beta-D-ribosyl)acetamidine + ATP = 5-amino-1-(5-phospho-beta-D-ribosyl)imidazole + ADP + phosphate + H(+). It functions in the pathway purine metabolism; IMP biosynthesis via de novo pathway; 5-amino-1-(5-phospho-D-ribosyl)imidazole from N(2)-formyl-N(1)-(5-phospho-D-ribosyl)glycinamide: step 2/2. The sequence is that of Phosphoribosylformylglycinamidine cyclo-ligase from Methanobrevibacter smithii (strain ATCC 35061 / DSM 861 / OCM 144 / PS).